A 226-amino-acid polypeptide reads, in one-letter code: Probable chemoreceptor glutamine deamidase CheD (226 aa).

Belongs to the CheD family.

The enzyme catalyses L-glutaminyl-[protein] + H2O = L-glutamyl-[protein] + NH4(+). Functionally, probably deamidates glutamine residues to glutamate on methyl-accepting chemotaxis receptors (MCPs), playing an important role in chemotaxis. This chain is Probable chemoreceptor glutamine deamidase CheD, found in Bordetella avium (strain 197N).